The chain runs to 193 residues: Putative manganese efflux pump MntP (193 aa).

Transmembrane regions (helical) follow at residues 3–23 (LATLTVLGFSLSADAFAAALG), 39–59 (VGAYFGAFEAAAPLIGWALGL), 65–85 (IAAFDHWVAFTLLAGVGGHMV), 113–133 (LALAALATSIDATAVGIGLAV), 138–158 (ILMACALIGAITTVVAAGGVL), and 173–193 (VLGGLALIGIGLKILIEHLSA).

This sequence belongs to the MntP (TC 9.B.29) family.

The protein localises to the cell inner membrane. Probably functions as a manganese efflux pump. The sequence is that of Putative manganese efflux pump MntP from Rhodospirillum rubrum (strain ATCC 11170 / ATH 1.1.1 / DSM 467 / LMG 4362 / NCIMB 8255 / S1).